Consider the following 176-residue polypeptide: Probable chemoreceptor glutamine deamidase CheD (176 aa).

The protein belongs to the CheD family.

The catalysed reaction is L-glutaminyl-[protein] + H2O = L-glutamyl-[protein] + NH4(+). Its function is as follows. Probably deamidates glutamine residues to glutamate on methyl-accepting chemotaxis receptors (MCPs), playing an important role in chemotaxis. The protein is Probable chemoreceptor glutamine deamidase CheD of Rhodospirillum rubrum (strain ATCC 11170 / ATH 1.1.1 / DSM 467 / LMG 4362 / NCIMB 8255 / S1).